Consider the following 193-residue polypeptide: C-type lectin domain family 3 member A homolog (193 aa).

The signal sequence occupies residues 1–24 (MAQAGLLIWLFFTILLLDLTCTQS). Disulfide bonds link Cys-66-Cys-76, Cys-93-Cys-188, and Cys-164-Cys-180. The 118-residue stretch at 72–189 (IHKKCYLSFE…CRSLKKYICE (118 aa)) folds into the C-type lectin domain.

Its subcellular location is the secreted. The polypeptide is C-type lectin domain family 3 member A homolog (clec3a) (Xenopus laevis (African clawed frog)).